The chain runs to 345 residues: Protein TRIGALACTOSYLDIACYLGLYCEROL 3, chloroplastic (345 aa).

A chloroplast-targeting transit peptide spans 1–46 (MLSLSCSSSSSSLLPPSLHYHGSSSVQSIVVPRRSLISFRRKVSCC). One can recognise an ABC transporter domain in the interval 85-336 (IECRDVYKSF…TNPIVQQFAT (252 aa)). ATP is bound at residue 117 to 124 (GPSGTGKS).

This sequence belongs to the ABC transporter superfamily. ABCI family. In terms of assembly, catalytic subunit of the TGD complex, a lipid translocator at the inner chloroplast envelope membrane made of TGD1, TGD2 and TGD3. Interacts with TGD1 and TGD2 with an overall subunit stoichiometry of 2 TGD1, 2 TGD3 and 8 to 12 TGD2. Interacts with TGD5.

It localises to the plastid. The protein resides in the chloroplast stroma. Functionally, ATPase transporter involved in lipid transfer from the endoplasmic reticulum (ER) to plastids, and necessary for thylakoids formation. Not involved in transition metal transport pathways. The polypeptide is Protein TRIGALACTOSYLDIACYLGLYCEROL 3, chloroplastic (Arabidopsis thaliana (Mouse-ear cress)).